The chain runs to 188 residues: Ribosome maturation factor RimM (188 aa).

Positions glutamate 93–leucine 166 constitute a PRC barrel domain.

Belongs to the RimM family. In terms of assembly, binds ribosomal protein uS19.

The protein localises to the cytoplasm. In terms of biological role, an accessory protein needed during the final step in the assembly of 30S ribosomal subunit, possibly for assembly of the head region. Essential for efficient processing of 16S rRNA. May be needed both before and after RbfA during the maturation of 16S rRNA. It has affinity for free ribosomal 30S subunits but not for 70S ribosomes. The protein is Ribosome maturation factor RimM of Streptomyces coelicolor (strain ATCC BAA-471 / A3(2) / M145).